The chain runs to 444 residues: Acyl-CoA 6-desaturase (444 aa).

Over 1–130 the chain is Cytoplasmic; sequence MGKGGNQGEG…EDMNLFKTNH (130 aa). In terms of domain architecture, Cytochrome b5 heme-binding spans 18–95; that stretch reads MPTFRWEEIQ…LKPLLIGELA (78 aa). Residues 131–151 form a helical membrane-spanning segment; it reads LFFFLLLSHIIVMESIAWFIL. Over 152-157 the chain is Lumenal; the sequence is SYFGNG. Residues 158–178 form a helical membrane-spanning segment; the sequence is WIPTVITAFVLATSQAQAGWL. Residues 179-264 lie on the Cytoplasmic side of the membrane; that stretch reads QHDYGHLSVY…KYLPYNHQHE (86 aa). The Histidine box-1 signature appears at 180–184; that stretch reads HDYGH. The Histidine box-2 signature appears at 217–221; it reads HFQHH. Residues 265 to 285 form a helical membrane-spanning segment; the sequence is YFFLIGPPLLIPMYFQYQIIM. Residues 286–305 are Lumenal-facing; it reads TMIRRRDWVDLAWAISYYAR. The helical transmembrane segment at 306–326 threads the bilayer; the sequence is FFYTYIPFYGILGALVFLNFI. Over 327 to 444 the chain is Cytoplasmic; that stretch reads RFLESHWFVW…ELWLDAYLHK (118 aa). A Histidine box-3 motif is present at residues 382–386; sequence QIEHH.

This sequence belongs to the fatty acid desaturase type 1 family. Expressed in the liver and brain (at protein level). Highest activity is found in the liver and adrenals followed by the testes and other organs, absent in adipose tissue.

The protein resides in the endoplasmic reticulum membrane. Its subcellular location is the microsome membrane. It catalyses the reaction (9Z,12Z)-octadecadienoyl-CoA + 2 Fe(II)-[cytochrome b5] + O2 + 2 H(+) = (6Z,9Z,12Z)-octadecatrienoyl-CoA + 2 Fe(III)-[cytochrome b5] + 2 H2O. The enzyme catalyses (9Z,12Z,15Z)-octadecatrienoyl-CoA + 2 Fe(II)-[cytochrome b5] + O2 + 2 H(+) = (6Z,9Z,12Z,15Z)-octadecatetraenoyl-CoA + 2 Fe(III)-[cytochrome b5] + 2 H2O. The catalysed reaction is (9Z,12Z,15Z,18Z,21Z)-tetracosapentaenoyl-CoA + 2 Fe(II)-[cytochrome b5] + O2 + 2 H(+) = (6Z,9Z,12Z,15Z,18Z,21Z)-tetracosahexaenoyl-CoA + 2 Fe(III)-[cytochrome b5] + 2 H2O. It carries out the reaction (11E)-octadecenoyl-CoA + 2 Fe(II)-[cytochrome b5] + O2 + 2 H(+) = (6Z,11E)-octadecadienoyl-CoA + 2 Fe(III)-[cytochrome b5] + 2 H2O. It catalyses the reaction (11Z,14Z)-eicosadienoyl-CoA + 2 Fe(II)-[cytochrome b5] + O2 + 2 H(+) = (8Z,11Z,14Z)-eicosatrienoyl-CoA + 2 Fe(III)-[cytochrome b5] + 2 H2O. The enzyme catalyses (11Z,14Z,17Z)-eicosatrienoyl-CoA + 2 Fe(II)-[cytochrome b5] + O2 + 2 H(+) = (8Z,11Z,14Z,17Z)-eicosatetraenoyl-CoA + 2 Fe(III)-[cytochrome b5] + 2 H2O. The protein operates within lipid metabolism; polyunsaturated fatty acid biosynthesis. In terms of biological role, involved in the biosynthesis of highly unsaturated fatty acids (HUFA) from the essential polyunsaturated fatty acids (PUFA) linoleic acid (LA) (18:2n-6) and alpha-linolenic acid (ALA) (18:3n-3) precursors, acting as a fatty acyl-coenzyme A (CoA) desaturase that introduces a cis double bond at carbon 6 of the fatty acyl chain. Catalyzes the first and rate limiting step in this pathway which is the desaturation of LA (18:2n-6) and ALA (18:3n-3) into gamma-linoleate (GLA) (18:3n-6) and stearidonate (18:4n-3), respectively. Subsequently, in the biosynthetic pathway of HUFA n-3 series, it desaturates tetracosapentaenoate (24:5n-3) to tetracosahexaenoate (24:6n-3), which is then converted to docosahexaenoate (DHA)(22:6n-3), an important lipid for nervous system function. It can also desaturate (11E)-octadecenoate (trans-vaccenoate) at carbon 6 generating (6Z,11E)-octadecadienoate. In addition to Delta-6 activity, this enzyme exhibits Delta-8 activity with slight biases toward n-3 fatty acyl-CoA substrates. In Rattus norvegicus (Rat), this protein is Acyl-CoA 6-desaturase (Fads2).